A 151-amino-acid polypeptide reads, in one-letter code: MHALQAKILDPRIGNEFPLPAYATTGSAGLDLRAMLKEDTLLEPGQTLLIPTGLSIYIGDPGLAALILPRSGLGHKHGIVLGNLVGLIDSDYQGELMVSCWNRGHTAFNIAVGERIAQLVLVPVVQAHFELVEAFDESQRGAGGFGHSGSH.

Substrate is bound by residues 70 to 72 (RSG), N83, 87 to 89 (LID), and M97.

Belongs to the dUTPase family. The cofactor is Mg(2+).

It catalyses the reaction dUTP + H2O = dUMP + diphosphate + H(+). The protein operates within pyrimidine metabolism; dUMP biosynthesis; dUMP from dCTP (dUTP route): step 2/2. In terms of biological role, this enzyme is involved in nucleotide metabolism: it produces dUMP, the immediate precursor of thymidine nucleotides and it decreases the intracellular concentration of dUTP so that uracil cannot be incorporated into DNA. The polypeptide is Deoxyuridine 5'-triphosphate nucleotidohydrolase (Pseudomonas syringae pv. syringae (strain B728a)).